The chain runs to 239 residues: Small ribosomal subunit protein uS3 (239 aa).

In terms of domain architecture, KH type-2 spans 39-107 (IRAALMKTLK…EVLINIVEVR (69 aa)). Positions 214–239 (AQDKKMAEQDHGGGGGDRRRRDRDAA) are disordered.

It belongs to the universal ribosomal protein uS3 family. In terms of assembly, part of the 30S ribosomal subunit. Forms a tight complex with proteins S10 and S14.

Binds the lower part of the 30S subunit head. Binds mRNA in the 70S ribosome, positioning it for translation. This is Small ribosomal subunit protein uS3 from Methylocella silvestris (strain DSM 15510 / CIP 108128 / LMG 27833 / NCIMB 13906 / BL2).